The primary structure comprises 964 residues: Lon protease homolog, mitochondrial (964 aa).

The region spanning 89–300 is the Lon N-terminal domain; sequence VIALPLPHRP…LTLELVKKEM (212 aa). 455 to 462 contacts ATP; sequence GPPGVGKT. Residues 663–740 are disordered; it reads GVSNEPDHES…TSKGNKGTDG (78 aa). The span at 673-687 shows a compositional bias: polar residues; the sequence is VSASVTEESGNGDNT. Residues 688-698 show a composition bias toward basic and acidic residues; it reads TTKDEILKDPA. The span at 703-712 shows a compositional bias: polar residues; the sequence is SVTNNVTNPA. The 185-residue stretch at 773 to 957 folds into the Lon proteolytic domain; that stretch reads HTPVGVVMGL…SEIYDLAFQS (185 aa). Catalysis depends on residues Ser863 and Lys906.

Belongs to the peptidase S16 family. As to quaternary structure, homoheptamer. Organized in a ring with a central cavity.

It is found in the mitochondrion matrix. It catalyses the reaction Hydrolysis of proteins in presence of ATP.. In terms of biological role, ATP-dependent serine protease that mediates the selective degradation of misfolded, unassembled or oxidatively damaged polypeptides as well as certain short-lived regulatory proteins in the mitochondrial matrix. May also have a chaperone function in the assembly of inner membrane protein complexes. Participates in the regulation of mitochondrial gene expression and in the maintenance of the integrity of the mitochondrial genome. Binds to mitochondrial DNA in a site-specific manner. The polypeptide is Lon protease homolog, mitochondrial (LON2) (Zea mays (Maize)).